Consider the following 156-residue polypeptide: Small ribosomal subunit protein uS7 (156 aa).

It belongs to the universal ribosomal protein uS7 family. Part of the 30S ribosomal subunit. Contacts proteins S9 and S11.

Functionally, one of the primary rRNA binding proteins, it binds directly to 16S rRNA where it nucleates assembly of the head domain of the 30S subunit. Is located at the subunit interface close to the decoding center, probably blocks exit of the E-site tRNA. This chain is Small ribosomal subunit protein uS7, found in Clostridium acetobutylicum (strain ATCC 824 / DSM 792 / JCM 1419 / IAM 19013 / LMG 5710 / NBRC 13948 / NRRL B-527 / VKM B-1787 / 2291 / W).